A 122-amino-acid chain; its full sequence is UPF0102 protein MUL_2060 (122 aa).

Belongs to the UPF0102 family.

This Mycobacterium ulcerans (strain Agy99) protein is UPF0102 protein MUL_2060.